A 61-amino-acid chain; its full sequence is Large ribosomal subunit protein bL28 (61 aa).

It belongs to the bacterial ribosomal protein bL28 family.

The protein is Large ribosomal subunit protein bL28 of Lactobacillus johnsonii (strain CNCM I-12250 / La1 / NCC 533).